Here is a 565-residue protein sequence, read N- to C-terminus: Translation machinery-associated protein 64 (565 aa).

The region spanning 89 to 170 (LPIVLTHGFV…VAVKIIHHFN (82 aa)) is the PUA domain. Residues 362-447 (TLYKPFNLAK…GEILHPLLTN (86 aa)) enclose the SWIB/MDM2 domain. Residues 475–547 (IKIITEMKIG…SIIDHLNKLG (73 aa)) enclose the SUI1 domain.

This sequence belongs to the eIF2D family. Interacts with the 40S ribosomal subunit.

The polypeptide is Translation machinery-associated protein 64 (TMA64) (Saccharomyces cerevisiae (strain ATCC 204508 / S288c) (Baker's yeast)).